The primary structure comprises 347 residues: Ribosomal RNA small subunit methyltransferase C (347 aa).

The protein belongs to the methyltransferase superfamily. RsmC family. As to quaternary structure, monomer.

The protein localises to the cytoplasm. It catalyses the reaction guanosine(1207) in 16S rRNA + S-adenosyl-L-methionine = N(2)-methylguanosine(1207) in 16S rRNA + S-adenosyl-L-homocysteine + H(+). Specifically methylates the guanine in position 1207 of 16S rRNA in the 30S particle. In Shewanella baltica (strain OS195), this protein is Ribosomal RNA small subunit methyltransferase C.